The chain runs to 74 residues: uncharacterized protein (74 aa).

The signal sequence occupies residues 1–19 (MNPGFDAVDQETAAAQAVA).

This is an uncharacterized protein from Mycobacterium tuberculosis (strain ATCC 25618 / H37Rv).